A 207-amino-acid polypeptide reads, in one-letter code: Segregation and condensation protein B (207 aa).

A disordered region spans residues 173–207; that stretch reads DDTAESDNDSADLYYRQFEQTLNETGPETAPKGEQ.

This sequence belongs to the ScpB family. Homodimer. Homodimerization may be required to stabilize the binding of ScpA to the Smc head domains. Component of a cohesin-like complex composed of ScpA, ScpB and the Smc homodimer, in which ScpA and ScpB bind to the head domain of Smc. The presence of the three proteins is required for the association of the complex with DNA.

Its subcellular location is the cytoplasm. Functionally, participates in chromosomal partition during cell division. May act via the formation of a condensin-like complex containing Smc and ScpA that pull DNA away from mid-cell into both cell halves. This is Segregation and condensation protein B from Latilactobacillus sakei subsp. sakei (strain 23K) (Lactobacillus sakei subsp. sakei).